A 909-amino-acid polypeptide reads, in one-letter code: Phosphoenolpyruvate carboxylase (909 aa).

Residues His151 and Lys578 contribute to the active site.

The protein belongs to the PEPCase type 1 family. The cofactor is Mg(2+).

The catalysed reaction is oxaloacetate + phosphate = phosphoenolpyruvate + hydrogencarbonate. Forms oxaloacetate, a four-carbon dicarboxylic acid source for the tricarboxylic acid cycle. This is Phosphoenolpyruvate carboxylase from Caulobacter vibrioides (strain ATCC 19089 / CIP 103742 / CB 15) (Caulobacter crescentus).